Consider the following 476-residue polypeptide: Ribulose bisphosphate carboxylase large chain (476 aa).

Positions 1 to 2 (MS) are excised as a propeptide. P3 is subject to N-acetylproline. The residue at position 14 (K14) is an N6,N6,N6-trimethyllysine. 2 residues coordinate substrate: N123 and T173. Residue K175 is the Proton acceptor of the active site. K177 is a binding site for substrate. Residues K201, D203, and E204 each coordinate Mg(2+). N6-carboxylysine is present on K201. The active-site Proton acceptor is the H294. Residues R295, H327, and S379 each contribute to the substrate site.

The protein belongs to the RuBisCO large chain family. Type I subfamily. As to quaternary structure, heterohexadecamer of 8 large chains and 8 small chains; disulfide-linked. The disulfide link is formed within the large subunit homodimers. Mg(2+) is required as a cofactor. Post-translationally, the disulfide bond which can form in the large chain dimeric partners within the hexadecamer appears to be associated with oxidative stress and protein turnover.

The protein localises to the plastid. It localises to the chloroplast. The catalysed reaction is 2 (2R)-3-phosphoglycerate + 2 H(+) = D-ribulose 1,5-bisphosphate + CO2 + H2O. It carries out the reaction D-ribulose 1,5-bisphosphate + O2 = 2-phosphoglycolate + (2R)-3-phosphoglycerate + 2 H(+). In terms of biological role, ruBisCO catalyzes two reactions: the carboxylation of D-ribulose 1,5-bisphosphate, the primary event in carbon dioxide fixation, as well as the oxidative fragmentation of the pentose substrate in the photorespiration process. Both reactions occur simultaneously and in competition at the same active site. The chain is Ribulose bisphosphate carboxylase large chain from Setaria italica (Foxtail millet).